A 99-amino-acid chain; its full sequence is Small ribosomal subunit protein bS20 (99 aa).

This sequence belongs to the bacterial ribosomal protein bS20 family.

In terms of biological role, binds directly to 16S ribosomal RNA. The protein is Small ribosomal subunit protein bS20 of Chlamydia pneumoniae (Chlamydophila pneumoniae).